We begin with the raw amino-acid sequence, 355 residues long: 3-dehydroquinate synthase (355 aa).

NAD(+)-binding positions include 71 to 76, 105 to 109, 129 to 130, Lys-142, and Lys-151; these read EGEERK, GVVGD, and TS. Positions 184, 246, and 263 each coordinate Zn(2+).

Belongs to the sugar phosphate cyclases superfamily. Dehydroquinate synthase family. It depends on Co(2+) as a cofactor. Zn(2+) is required as a cofactor. Requires NAD(+) as cofactor.

It localises to the cytoplasm. The catalysed reaction is 7-phospho-2-dehydro-3-deoxy-D-arabino-heptonate = 3-dehydroquinate + phosphate. It functions in the pathway metabolic intermediate biosynthesis; chorismate biosynthesis; chorismate from D-erythrose 4-phosphate and phosphoenolpyruvate: step 2/7. Its function is as follows. Catalyzes the conversion of 3-deoxy-D-arabino-heptulosonate 7-phosphate (DAHP) to dehydroquinate (DHQ). This Streptococcus pneumoniae (strain 70585) protein is 3-dehydroquinate synthase.